A 535-amino-acid polypeptide reads, in one-letter code: Dual specificity calcium/calmodulin-dependent 3',5'-cyclic nucleotide phosphodiesterase 1B (535 aa).

The interval 1–21 is disordered; it reads MELSPRSPPEMLESDCPSPLE. Serine 7 and serine 14 each carry phosphoserine. Calmodulin-binding stretches follow at residues 27–47 and 117–140; these read SKKM…QLEN and EKPK…MFRR. The PDEase domain occupies 145-502; the sequence is VGPTYSTAVH…QKWKERAASG (358 aa). Histidine 222 acts as the Proton donor in catalysis. Residues histidine 226, histidine 262, aspartate 263, and aspartate 369 each contribute to the Zn(2+) site. Aspartate 263 is a Mg(2+) binding site. Disordered stretches follow at residues 444–474 and 495–535; these read QPLA…GDPN and WKER…GNLD. The segment covering 454–463 has biased composition (polar residues); it reads KSQPSFQWRQ. 2 positions are modified to phosphoserine: serine 465 and serine 513.

It belongs to the cyclic nucleotide phosphodiesterase family. PDE1 subfamily. As to quaternary structure, homodimer. It depends on Zn(2+) as a cofactor. Mg(2+) serves as cofactor.

The protein localises to the cytoplasm. The protein resides in the cytosol. The enzyme catalyses a nucleoside 3',5'-cyclic phosphate + H2O = a nucleoside 5'-phosphate + H(+). It carries out the reaction 3',5'-cyclic GMP + H2O = GMP + H(+). The catalysed reaction is 3',5'-cyclic AMP + H2O = AMP + H(+). With respect to regulation, type I PDE are activated by the binding of calmodulin in the presence of Ca(2+). Its function is as follows. Cyclic nucleotide phosphodiesterase with a dual specificity for the second messengers cAMP and cGMP, which are key regulators of many important physiological processes. Has a preference for cGMP as a substrate. This chain is Dual specificity calcium/calmodulin-dependent 3',5'-cyclic nucleotide phosphodiesterase 1B, found in Mus musculus (Mouse).